The following is a 356-amino-acid chain: D-amino-acid oxidase (356 aa).

The first 17 residues, 1 to 17 (MAKIVVIGAGVAGLTTA), serve as a signal peptide directing secretion. The FAD site is built by A9, S44, G48, and N50. Residue F54 participates in anthranilate binding. V171 contributes to the FAD binding site. An N-linked (GlcNAc...) asparagine glycan is attached at N192. An anthranilate-binding site is contributed by Y243. Y243 contributes to the (R)-lactate binding site. Residue N262 is glycosylated (N-linked (GlcNAc...) asparagine). FAD-binding residues include R302, A329, G332, Y333, and Q334. Anthranilate is bound at residue R302. R302 contacts (R)-lactate.

This sequence belongs to the DAMOX/DASOX family. FAD is required as a cofactor.

It localises to the peroxisome matrix. It carries out the reaction a D-alpha-amino acid + O2 + H2O = a 2-oxocarboxylate + H2O2 + NH4(+). The enzyme catalyses D-alanine + O2 + H2O = pyruvate + H2O2 + NH4(+). The catalysed reaction is D-serine + O2 + H2O = 3-hydroxypyruvate + H2O2 + NH4(+). It catalyses the reaction D-phenylalanine + O2 + H2O = 3-phenylpyruvate + H2O2 + NH4(+). It carries out the reaction D-lysine + O2 + H2O = 6-amino-2-oxohexanoate + H2O2 + NH4(+). The enzyme catalyses D-tyrosine + O2 + H2O = 3-(4-hydroxyphenyl)pyruvate + H2O2 + NH4(+). The catalysed reaction is D-methionine + O2 + H2O = 4-methylsulfanyl-2-oxobutanoate + H2O2 + NH4(+). It catalyses the reaction D-tryptophan + O2 + H2O = indole-3-pyruvate + H2O2 + NH4(+). It carries out the reaction D-leucine + O2 + H2O = 4-methyl-2-oxopentanoate + H2O2 + NH4(+). The enzyme catalyses D-valine + O2 + H2O = 3-methyl-2-oxobutanoate + H2O2 + NH4(+). With respect to regulation, inhibited by benzoate and hypochlorite. Catalyzes the oxidative deamination of D-amino acids with broad substrate specificity. Enables the organism to utilize D-amino acids as a source of nutrients. This Trigonopsis variabilis (Yeast) protein is D-amino-acid oxidase.